We begin with the raw amino-acid sequence, 352 residues long: B1 bradykinin receptor (352 aa).

Residues 1–41 (MASWPPLELQSSNQSQLFPQNATACDNAPEAWDLLHRVLPT) lie on the Extracellular side of the membrane. 2 N-linked (GlcNAc...) asparagine glycosylation sites follow: Asn13 and Asn21. Residues 42 to 62 (FIISICSFGLLGNLFVLLVFL) form a helical membrane-spanning segment. Over 63–72 (LPRRRLNVAE) the chain is Cytoplasmic. Residues 73–93 (IYLANLAASDLVFVLGLPFWA) traverse the membrane as a helical segment. Over 94–110 (ENIWNQFNWPFGALLCR) the chain is Extracellular. Cysteines 109 and 188 form a disulfide. The chain crosses the membrane as a helical span at residues 111–131 (GINGVIKANLFISIFLVVAIS). At 132-153 (QDRYCLLVHPMASRRRQRRRQA) the chain is on the cytoplasmic side. A helical transmembrane segment spans residues 154–174 (RVTCVLIWVVGGLLSIPTFLL). The Extracellular segment spans residues 175–206 (RSIQAVPDLNITACILLLPHEAWHFARIVELN). An N-linked (GlcNAc...) asparagine glycan is attached at Asn184. Residues 207-227 (ILAFLLPLAAIVFFNYHILAS) traverse the membrane as a helical segment. Topologically, residues 228-250 (LRGREEVSRTRCGGRKDSKTTAL) are cytoplasmic. The chain crosses the membrane as a helical span at residues 251-271 (ILTLVVAFLVCWAPYHFFAFL). Residues 272-294 (EFLFQVQAIRGCFWEDFIDLGLQ) lie on the Extracellular side of the membrane. A helical transmembrane segment spans residues 295–315 (LANFLAFTNSSLNPVIYVFVG). Topologically, residues 316–352 (RLFRTKVWELYKQCTPKSLAPISSSHRKEIFQLFWRN) are cytoplasmic. Residue Cys329 is the site of S-palmitoyl cysteine attachment.

Belongs to the G-protein coupled receptor 1 family. Bradykinin receptor subfamily. BDKRB1 sub-subfamily.

The protein resides in the cell membrane. In terms of biological role, this is a receptor for bradykinin. Could be a factor in chronic pain and inflammation. This chain is B1 bradykinin receptor (BDKRB1), found in Chlorocebus aethiops (Green monkey).